Consider the following 168-residue polypeptide: uncharacterized protein (168 aa).

Disordered regions lie at residues 1–81 and 119–150; these read MSSA…GRSW and RDLS…STVA. Low complexity predominate over residues 7 to 34; sequence SRTSRSKATGASSSSISSSIRASPSSSS. Positions 43 to 67 are enriched in basic residues; it reads TRRRRRRTGRRSTKRSIISPRRRRM. The span at 123-146 shows a compositional bias: polar residues; sequence ESASTGSENLSRKASNQSQSQGRL.

This is an uncharacterized protein from Human adenovirus C serotype 2 (HAdV-2).